The sequence spans 338 residues: High mobility group B protein 9 (338 aa).

The region spanning 38–129 is the ARID domain; that stretch reads VKDSSVFWDT…LLFHYEQVHL (92 aa). The disordered stretch occupies residues 233-259; sequence TGRRRRRLGKRRRSRRREDPNYPKPNR. Residues 235-247 show a composition bias toward basic residues; the sequence is RRRRRLGKRRRSR. Positions 255-322 form a DNA-binding region, HMG box; the sequence is PKPNRSGYNF…RYQRELNEYR (68 aa).

In terms of tissue distribution, predominantly expressed in leaves, flowers and seedlings.

The protein resides in the nucleus. Its function is as follows. Binds preferentially DNA with A/T-rich content. Required for karyogamy during female gametophyte development, when the two polar nuclei fuse to form the diploid central cell nucleus. This Arabidopsis thaliana (Mouse-ear cress) protein is High mobility group B protein 9 (HMGB9).